Here is a 632-residue protein sequence, read N- to C-terminus: SH2B adapter protein 2 (632 aa).

Tyr52 is modified (phosphotyrosine). Residue Ser141 is modified to Phosphoserine. Residues 193 to 306 (DIQREGALRF…WVADIQGCVD (114 aa)) form the PH domain. Phosphoserine is present on Ser310. The disordered stretch occupies residues 381–409 (TLESPGGSGSDSNNTGEQGAETDPEAEPE). Over residues 400–409 (AETDPEAEPE) the composition is skewed to acidic residues. The 99-residue stretch at 417-515 (WFHGTLSRVK…SADITLRSYV (99 aa)) folds into the SH2 domain. Disordered stretches follow at residues 516 to 537 (RAQD…SPAC) and 558 to 632 (ASPS…YSFY). Residues 519–532 (DPPPEPGPTPPAAP) show a composition bias toward pro residues. Composition is skewed to low complexity over residues 558-579 (ASPS…AASG) and 604-626 (EAVA…RAVE). The residue at position 629 (Tyr629) is a Phosphotyrosine.

This sequence belongs to the SH2B adapter family. In terms of assembly, homodimer. Interacts with KIT/c-KIT, SHC1, EPOR, PDGFR, VAV1 and VAV3. Interacts (via N-terminal region) with SHC1. Interacts (via the phosphorylated C-terminus) with GRB2. Interacts (via its SH2 domain) with EPOR, INSR and KIT. Interacts with GRB2 after B-cell antigen receptor stimulation. Interacts (via PH domain) with VAV3. Interacts with NTRK1, NTRK2 and NTRK3 (phosphorylated); after stimulation of the receptor by its extracellular ligand and subsequent autophosphorylation of the receptor. Binds INSR, GRB2, ASB6 and CAP. Insulin stimulation leads to dissociation of CAP. Binds CBS only when SH2B2/APS has become phosphorylated. INSR binding does not depend on the phosphorylation of SH2B2/APS. In terms of processing, tyrosine phosphorylated by JAK2, KIT and other kinases activated by B-cell receptor in response to stimulation with cytokines, IL3, IL5, PDGF, IGF1, IGF2, CSF2/GM-CSF and cross-linking of the B-cell receptor complex. Expressed in spleen, prostate, testis, uterus, small intestine and skeletal muscle. Among hematopoietic cell lines, expressed exclusively in B-cells. Not expressed in most tumor cell lines.

Its subcellular location is the cytoplasm. The protein resides in the cell membrane. In terms of biological role, adapter protein for several members of the tyrosine kinase receptor family. Involved in multiple signaling pathways. May be involved in coupling from immunoreceptor to Ras signaling. Acts as a negative regulator of cytokine signaling in collaboration with CBL. Binds to EPOR and suppresses EPO-induced STAT5 activation, possibly through a masking effect on STAT5 docking sites in EPOR. Suppresses PDGF-induced mitogenesis. May induce cytoskeletal reorganization via interaction with VAV3. In Homo sapiens (Human), this protein is SH2B adapter protein 2 (SH2B2).